The sequence spans 149 residues: D-aminoacyl-tRNA deacylase (149 aa).

A Gly-cisPro motif, important for rejection of L-amino acids motif is present at residues 137–138; the sequence is GP.

This sequence belongs to the DTD family. As to quaternary structure, homodimer.

It is found in the cytoplasm. The enzyme catalyses glycyl-tRNA(Ala) + H2O = tRNA(Ala) + glycine + H(+). It carries out the reaction a D-aminoacyl-tRNA + H2O = a tRNA + a D-alpha-amino acid + H(+). Its function is as follows. An aminoacyl-tRNA editing enzyme that deacylates mischarged D-aminoacyl-tRNAs. Also deacylates mischarged glycyl-tRNA(Ala), protecting cells against glycine mischarging by AlaRS. Acts via tRNA-based rather than protein-based catalysis; rejects L-amino acids rather than detecting D-amino acids in the active site. By recycling D-aminoacyl-tRNA to D-amino acids and free tRNA molecules, this enzyme counteracts the toxicity associated with the formation of D-aminoacyl-tRNA entities in vivo and helps enforce protein L-homochirality. This Syntrophus aciditrophicus (strain SB) protein is D-aminoacyl-tRNA deacylase.